Reading from the N-terminus, the 454-residue chain is Bifunctional protein GlmU (454 aa).

The interval methionine 1–arginine 232 is pyrophosphorylase. UDP-N-acetyl-alpha-D-glucosamine is bound by residues leucine 11–glycine 14, lysine 25, glutamine 78, and glycine 83–threonine 84. Aspartate 108 provides a ligand contact to Mg(2+). UDP-N-acetyl-alpha-D-glucosamine-binding residues include glycine 144, glutamate 158, asparagine 173, and asparagine 230. Residue asparagine 230 participates in Mg(2+) binding. The tract at residues alanine 233–serine 253 is linker. The interval glycine 254 to lysine 454 is N-acetyltransferase. 2 residues coordinate UDP-N-acetyl-alpha-D-glucosamine: arginine 319 and lysine 337. Histidine 349 functions as the Proton acceptor in the catalytic mechanism. Positions 352 and 363 each coordinate UDP-N-acetyl-alpha-D-glucosamine. Residues alanine 366, asparagine 372–tyrosine 373, serine 391, serine 409, and arginine 426 contribute to the acetyl-CoA site.

This sequence in the N-terminal section; belongs to the N-acetylglucosamine-1-phosphate uridyltransferase family. It in the C-terminal section; belongs to the transferase hexapeptide repeat family. As to quaternary structure, homotrimer. Mg(2+) is required as a cofactor.

The protein resides in the cytoplasm. The catalysed reaction is alpha-D-glucosamine 1-phosphate + acetyl-CoA = N-acetyl-alpha-D-glucosamine 1-phosphate + CoA + H(+). It catalyses the reaction N-acetyl-alpha-D-glucosamine 1-phosphate + UTP + H(+) = UDP-N-acetyl-alpha-D-glucosamine + diphosphate. It functions in the pathway nucleotide-sugar biosynthesis; UDP-N-acetyl-alpha-D-glucosamine biosynthesis; N-acetyl-alpha-D-glucosamine 1-phosphate from alpha-D-glucosamine 6-phosphate (route II): step 2/2. It participates in nucleotide-sugar biosynthesis; UDP-N-acetyl-alpha-D-glucosamine biosynthesis; UDP-N-acetyl-alpha-D-glucosamine from N-acetyl-alpha-D-glucosamine 1-phosphate: step 1/1. Its pathway is bacterial outer membrane biogenesis; LPS lipid A biosynthesis. Catalyzes the last two sequential reactions in the de novo biosynthetic pathway for UDP-N-acetylglucosamine (UDP-GlcNAc). The C-terminal domain catalyzes the transfer of acetyl group from acetyl coenzyme A to glucosamine-1-phosphate (GlcN-1-P) to produce N-acetylglucosamine-1-phosphate (GlcNAc-1-P), which is converted into UDP-GlcNAc by the transfer of uridine 5-monophosphate (from uridine 5-triphosphate), a reaction catalyzed by the N-terminal domain. The sequence is that of Bifunctional protein GlmU from Brucella canis (strain ATCC 23365 / NCTC 10854 / RM-666).